Consider the following 269-residue polypeptide: Putative pyruvate, phosphate dikinase regulatory protein (269 aa).

147–154 serves as a coordination point for ADP; sequence GVSRTSKT.

It belongs to the pyruvate, phosphate/water dikinase regulatory protein family. PDRP subfamily.

It catalyses the reaction N(tele)-phospho-L-histidyl/L-threonyl-[pyruvate, phosphate dikinase] + ADP = N(tele)-phospho-L-histidyl/O-phospho-L-threonyl-[pyruvate, phosphate dikinase] + AMP + H(+). The catalysed reaction is N(tele)-phospho-L-histidyl/O-phospho-L-threonyl-[pyruvate, phosphate dikinase] + phosphate + H(+) = N(tele)-phospho-L-histidyl/L-threonyl-[pyruvate, phosphate dikinase] + diphosphate. In terms of biological role, bifunctional serine/threonine kinase and phosphorylase involved in the regulation of the pyruvate, phosphate dikinase (PPDK) by catalyzing its phosphorylation/dephosphorylation. This chain is Putative pyruvate, phosphate dikinase regulatory protein, found in Geotalea uraniireducens (strain Rf4) (Geobacter uraniireducens).